A 171-amino-acid chain; its full sequence is Ribosome maturation factor RimM (171 aa).

The region spanning 96–170 (AEGEYYYHEI…LVTIHVMEGL (75 aa)) is the PRC barrel domain.

The protein belongs to the RimM family. In terms of assembly, binds ribosomal protein uS19.

It is found in the cytoplasm. Functionally, an accessory protein needed during the final step in the assembly of 30S ribosomal subunit, possibly for assembly of the head region. Essential for efficient processing of 16S rRNA. May be needed both before and after RbfA during the maturation of 16S rRNA. It has affinity for free ribosomal 30S subunits but not for 70S ribosomes. The chain is Ribosome maturation factor RimM from Bacillus cereus (strain G9842).